We begin with the raw amino-acid sequence, 123 residues long: S-adenosylmethionine decarboxylase proenzyme 2 (123 aa).

Residue S65 is the Schiff-base intermediate with substrate; via pyruvic acid of the active site. At S65 the chain carries Pyruvic acid (Ser); by autocatalysis. The active-site Proton acceptor; for processing activity is the H70. The active-site Proton donor; for catalytic activity is the C85.

The protein belongs to the prokaryotic AdoMetDC family. Type 1 subfamily. In terms of assembly, heterotetramer of two alpha and two beta chains arranged as a dimer of alpha/beta heterodimers. The cofactor is pyruvate. Is synthesized initially as an inactive proenzyme. Formation of the active enzyme involves a self-maturation process in which the active site pyruvoyl group is generated from an internal serine residue via an autocatalytic post-translational modification. Two non-identical subunits are generated from the proenzyme in this reaction, and the pyruvate is formed at the N-terminus of the alpha chain, which is derived from the carboxyl end of the proenzyme. The post-translation cleavage follows an unusual pathway, termed non-hydrolytic serinolysis, in which the side chain hydroxyl group of the serine supplies its oxygen atom to form the C-terminus of the beta chain, while the remainder of the serine residue undergoes an oxidative deamination to produce ammonia and the pyruvoyl group blocking the N-terminus of the alpha chain.

The catalysed reaction is S-adenosyl-L-methionine + H(+) = S-adenosyl 3-(methylsulfanyl)propylamine + CO2. It functions in the pathway amine and polyamine biosynthesis; S-adenosylmethioninamine biosynthesis; S-adenosylmethioninamine from S-adenosyl-L-methionine: step 1/1. Its function is as follows. Catalyzes the decarboxylation of S-adenosylmethionine to S-adenosylmethioninamine (dcAdoMet), the propylamine donor required for the synthesis of the polyamines spermine and spermidine from the diamine putrescine. The sequence is that of S-adenosylmethionine decarboxylase proenzyme 2 from Bacillus cereus (strain ATCC 14579 / DSM 31 / CCUG 7414 / JCM 2152 / NBRC 15305 / NCIMB 9373 / NCTC 2599 / NRRL B-3711).